The following is a 369-amino-acid chain: MPDPILLTPGPLTTSATTRHAMQHDWGSWDAAFNQLTASVCADLVAIAHGGDEYVCVPMQGSGTFSVEAALGTLVPRDGVVLVPDNGAYCARILKILGRLGIEAIALPFGEDAAVDPAAIEAAFAREPRITHVAQVHLETSAGVLNPLDDIAAVCRRHGKRLIVDAMSSFGALPITLAGSGIDALISASGKCLEGVPGMGFAIVRREALDASEGNSPSLALDLHDQYAYLLKTGQWRFTPPTHVIAALRAALDQYLAEGGQPARGARYVDNCRTLVESMHALGFTTFLDASVQAPVIVTFHAPDHPAYDFRRFYDAVRDAGFILYPGKLTQLETFRVGCIGAIDSNDIRRAVAAIAQAVESLGIAVQRA.

At Lys-191 the chain carries N6-(pyridoxal phosphate)lysine.

This sequence belongs to the class-V pyridoxal-phosphate-dependent aminotransferase family. PhnW subfamily. As to quaternary structure, homodimer. Pyridoxal 5'-phosphate serves as cofactor.

It catalyses the reaction (2-aminoethyl)phosphonate + pyruvate = phosphonoacetaldehyde + L-alanine. Functionally, involved in phosphonate degradation. The polypeptide is 2-aminoethylphosphonate--pyruvate transaminase 1 (Burkholderia lata (strain ATCC 17760 / DSM 23089 / LMG 22485 / NCIMB 9086 / R18194 / 383)).